The sequence spans 469 residues: Glutamate--tRNA ligase (469 aa).

The 'HIGH' region motif lies at 9–19 (PSPTGYLHVGG). Zn(2+) contacts are provided by Cys98, Cys100, Cys125, and Asp127. The short motif at 237-241 (KLSKR) is the 'KMSKS' region element. Residue Lys240 participates in ATP binding.

Belongs to the class-I aminoacyl-tRNA synthetase family. Glutamate--tRNA ligase type 1 subfamily. As to quaternary structure, monomer. Zn(2+) serves as cofactor.

Its subcellular location is the cytoplasm. The enzyme catalyses tRNA(Glu) + L-glutamate + ATP = L-glutamyl-tRNA(Glu) + AMP + diphosphate. In terms of biological role, catalyzes the attachment of glutamate to tRNA(Glu) in a two-step reaction: glutamate is first activated by ATP to form Glu-AMP and then transferred to the acceptor end of tRNA(Glu). The chain is Glutamate--tRNA ligase from Serratia proteamaculans (strain 568).